A 326-amino-acid polypeptide reads, in one-letter code: Lipoyl synthase (326 aa).

Residues C74, C79, C85, C100, C104, C107, and S314 each coordinate [4Fe-4S] cluster. The region spanning 85 to 303 (CFGKGTATFM…EEEAYKMGFT (219 aa)) is the Radical SAM core domain.

This sequence belongs to the radical SAM superfamily. Lipoyl synthase family. Requires [4Fe-4S] cluster as cofactor.

The protein localises to the cytoplasm. It catalyses the reaction [[Fe-S] cluster scaffold protein carrying a second [4Fe-4S](2+) cluster] + N(6)-octanoyl-L-lysyl-[protein] + 2 oxidized [2Fe-2S]-[ferredoxin] + 2 S-adenosyl-L-methionine + 4 H(+) = [[Fe-S] cluster scaffold protein] + N(6)-[(R)-dihydrolipoyl]-L-lysyl-[protein] + 4 Fe(3+) + 2 hydrogen sulfide + 2 5'-deoxyadenosine + 2 L-methionine + 2 reduced [2Fe-2S]-[ferredoxin]. It functions in the pathway protein modification; protein lipoylation via endogenous pathway; protein N(6)-(lipoyl)lysine from octanoyl-[acyl-carrier-protein]: step 2/2. Functionally, catalyzes the radical-mediated insertion of two sulfur atoms into the C-6 and C-8 positions of the octanoyl moiety bound to the lipoyl domains of lipoate-dependent enzymes, thereby converting the octanoylated domains into lipoylated derivatives. This is Lipoyl synthase from Delftia acidovorans (strain DSM 14801 / SPH-1).